A 554-amino-acid polypeptide reads, in one-letter code: Glucose-6-phosphate isomerase (554 aa).

The active-site Proton donor is Glu359. Residues His390 and Lys518 contribute to the active site.

It belongs to the GPI family.

It is found in the cytoplasm. The catalysed reaction is alpha-D-glucose 6-phosphate = beta-D-fructose 6-phosphate. It participates in carbohydrate biosynthesis; gluconeogenesis. It functions in the pathway carbohydrate degradation; glycolysis; D-glyceraldehyde 3-phosphate and glycerone phosphate from D-glucose: step 2/4. In terms of biological role, catalyzes the reversible isomerization of glucose-6-phosphate to fructose-6-phosphate. The sequence is that of Glucose-6-phosphate isomerase from Pseudomonas savastanoi pv. phaseolicola (strain 1448A / Race 6) (Pseudomonas syringae pv. phaseolicola (strain 1448A / Race 6)).